We begin with the raw amino-acid sequence, 484 residues long: ATP synthase subunit beta (484 aa).

169–176 is an ATP binding site; the sequence is GGAGVGKT.

This sequence belongs to the ATPase alpha/beta chains family. In terms of assembly, F-type ATPases have 2 components, CF(1) - the catalytic core - and CF(0) - the membrane proton channel. CF(1) has five subunits: alpha(3), beta(3), gamma(1), delta(1), epsilon(1). CF(0) has three main subunits: a(1), b(2) and c(9-12). The alpha and beta chains form an alternating ring which encloses part of the gamma chain. CF(1) is attached to CF(0) by a central stalk formed by the gamma and epsilon chains, while a peripheral stalk is formed by the delta and b chains.

It localises to the cell membrane. The catalysed reaction is ATP + H2O + 4 H(+)(in) = ADP + phosphate + 5 H(+)(out). Its function is as follows. Produces ATP from ADP in the presence of a proton gradient across the membrane. The catalytic sites are hosted primarily by the beta subunits. This is ATP synthase subunit beta from Nocardioides sp. (strain ATCC BAA-499 / JS614).